Reading from the N-terminus, the 524-residue chain is Bifunctional purine biosynthesis protein PurH (524 aa).

The MGS-like domain maps to 1-145; it reads MIKQALLSVS…KNHRDVTVIV (145 aa).

This sequence belongs to the PurH family.

The catalysed reaction is (6R)-10-formyltetrahydrofolate + 5-amino-1-(5-phospho-beta-D-ribosyl)imidazole-4-carboxamide = 5-formamido-1-(5-phospho-D-ribosyl)imidazole-4-carboxamide + (6S)-5,6,7,8-tetrahydrofolate. It carries out the reaction IMP + H2O = 5-formamido-1-(5-phospho-D-ribosyl)imidazole-4-carboxamide. It functions in the pathway purine metabolism; IMP biosynthesis via de novo pathway; 5-formamido-1-(5-phospho-D-ribosyl)imidazole-4-carboxamide from 5-amino-1-(5-phospho-D-ribosyl)imidazole-4-carboxamide (10-formyl THF route): step 1/1. It participates in purine metabolism; IMP biosynthesis via de novo pathway; IMP from 5-formamido-1-(5-phospho-D-ribosyl)imidazole-4-carboxamide: step 1/1. The polypeptide is Bifunctional purine biosynthesis protein PurH (Cupriavidus necator (strain ATCC 17699 / DSM 428 / KCTC 22496 / NCIMB 10442 / H16 / Stanier 337) (Ralstonia eutropha)).